The chain runs to 527 residues: Laccase-5 (527 aa).

Residues 1–23 (MGKFHSFVNVVALSLSLSGRVFG) form the signal peptide. The Plastocyanin-like 1 domain occupies 25–150 (IGPVTDLTIS…DGLRGPLVVY (126 aa)). N-linked (GlcNAc...) asparagine glycans are attached at residues Asn-74 and Asn-77. 4 residues coordinate Cu cation: His-87, His-89, His-132, and His-134. 2 cysteine pairs are disulfide-bonded: Cys-108–Cys-516 and Cys-140–Cys-230. N-linked (GlcNAc...) asparagine glycans are attached at residues Asn-156, Asn-209, Asn-233, Asn-242, Asn-276, Asn-317, Asn-358, Asn-366, Asn-393, and Asn-402. Positions 162 to 306 (VDDDTTVITL…GGVNSAILRY (145 aa)) constitute a Plastocyanin-like 2 domain. A Plastocyanin-like 3 domain is found at 373–498 (TVPVLLQILS…AGFAIVFAED (126 aa)). Cu cation contacts are provided by His-425, His-428, His-430, His-480, Cys-481, His-482, and His-486.

This sequence belongs to the multicopper oxidase family. Requires Cu cation as cofactor.

Its subcellular location is the secreted. The enzyme catalyses 4 hydroquinone + O2 = 4 benzosemiquinone + 2 H2O. Lignin degradation and detoxification of lignin-derived products. This chain is Laccase-5 (LCC5), found in Trametes versicolor (White-rot fungus).